We begin with the raw amino-acid sequence, 138 residues long: Phospholipase A2 homolog (138 aa).

Residues 1-16 (MRALWIVAVWLIGVEG) form the signal peptide. Disulfide bonds link Cys-42–Cys-131, Cys-44–Cys-60, Cys-59–Cys-111, Cys-65–Cys-138, Cys-66–Cys-104, Cys-73–Cys-97, and Cys-91–Cys-102. An important for membrane-damaging activities in eukaryotes and bacteria; heparin-binding region spans residues 121 to 133 (KKYTYYPNFLCKG).

The protein belongs to the phospholipase A2 family. Group II subfamily. S49 sub-subfamily. Monomer. Expressed by the venom gland.

It localises to the secreted. Its function is as follows. Snake venom phospholipase A2 homolog that lacks enzymatic activity. Shows high myotoxin activities and displays edema-inducing activities. Has cytotoxic activities against HUVEC cells (LC(50)=5.0 uL) and human lung adenocarcinoma A549 cells (LC(50)=5.2 uL). The sequence is that of Phospholipase A2 homolog from Echis ocellatus (Ocellated saw-scaled viper).